The primary structure comprises 344 residues: MKQTKTKYGKMKQIVSNLKLPDYRYEQLTKAIFHQRIDNFDDMHILPKVLRMSLVNEFGKNVSSVIPVFSQDSKQAQKLLFELTDGERIEAVGLKYKQGWESFCISSQCGCGFGCRFCATGSAGFKRNLTADEITDQLLYFYFNDHRLNSISFMGMGEAFANPELFDAVKILTDQNLFGLSQRRITISTIGIIPGIQSLTQKFPQVNLAFSLHSPFESQRSDLMPINKRFPLNQVMKTLDEHIIHTGRRVFIAYIMLEGINDSKEHAEAVVGLLKNRGSWEHLYHIDLIPYNSTDKTTFKFQSSNAIKQFCSTLKKAGISATVRTQFGSEISAACGQLCYENEL.

Glu-90 (proton acceptor) is an active-site residue. Positions 97 to 330 constitute a Radical SAM core domain; sequence KQGWESFCIS…ATVRTQFGSE (234 aa). A disulfide bridge connects residues Cys-104 and Cys-335. Cys-111, Cys-115, and Cys-118 together coordinate [4Fe-4S] cluster. S-adenosyl-L-methionine-binding positions include 157-158, Ser-188, 211-213, and Asn-292; these read GE and SLH. Cys-335 serves as the catalytic S-methylcysteine intermediate.

This sequence belongs to the radical SAM superfamily. RlmN family. Cfr subfamily. The cofactor is [4Fe-4S] cluster.

Its subcellular location is the cytoplasm. It carries out the reaction adenosine(2503) in 23S rRNA + 2 reduced [2Fe-2S]-[ferredoxin] + 2 S-adenosyl-L-methionine = 8-methyladenosine(2503) in 23S rRNA + 5'-deoxyadenosine + L-methionine + 2 oxidized [2Fe-2S]-[ferredoxin] + S-adenosyl-L-homocysteine. Its function is as follows. Specifically methylates position 8 of adenine 2503 in 23S rRNA. Confers resistance to some classes of antibiotics. The polypeptide is Ribosomal RNA large subunit methyltransferase Cfr (Clostridium botulinum (strain Langeland / NCTC 10281 / Type F)).